The sequence spans 282 residues: ATP synthase subunit a (282 aa).

Transmembrane regions (helical) follow at residues 38–58 (VDSM…LWLA), 97–117 (FVAP…AMDM), 145–165 (VVPT…LLLC), 187–207 (FGSH…EFVA), 225–247 (LIFI…GHIV), and 261–281 (TLQA…AHEG).

It belongs to the ATPase A chain family. F-type ATPases have 2 components, CF(1) - the catalytic core - and CF(0) - the membrane proton channel. CF(1) has five subunits: alpha(3), beta(3), gamma(1), delta(1), epsilon(1). CF(0) has three main subunits: a(1), b(2) and c(9-12). The alpha and beta chains form an alternating ring which encloses part of the gamma chain. CF(1) is attached to CF(0) by a central stalk formed by the gamma and epsilon chains, while a peripheral stalk is formed by the delta and b chains.

Its subcellular location is the cell inner membrane. Key component of the proton channel; it plays a direct role in the translocation of protons across the membrane. This chain is ATP synthase subunit a, found in Azoarcus sp. (strain BH72).